Reading from the N-terminus, the 341-residue chain is DNA-directed RNA polymerase subunit alpha (341 aa).

The tract at residues methionine 1–asparagine 226 is alpha N-terminal domain (alpha-NTD). The interval alanine 241–leucine 341 is alpha C-terminal domain (alpha-CTD).

It belongs to the RNA polymerase alpha chain family. In terms of assembly, homodimer. The RNAP catalytic core consists of 2 alpha, 1 beta, 1 beta' and 1 omega subunit. When a sigma factor is associated with the core the holoenzyme is formed, which can initiate transcription.

The enzyme catalyses RNA(n) + a ribonucleoside 5'-triphosphate = RNA(n+1) + diphosphate. DNA-dependent RNA polymerase catalyzes the transcription of DNA into RNA using the four ribonucleoside triphosphates as substrates. The chain is DNA-directed RNA polymerase subunit alpha from Acidothermus cellulolyticus (strain ATCC 43068 / DSM 8971 / 11B).